The chain runs to 283 residues: Non-selective voltage-gated ion channel VDAC1 (283 aa).

Ala2 is modified (N-acetylalanine). Residue Lys12 coordinates ATP. A Glycyl lysine isopeptide (Lys-Gly) (interchain with G-Cter in ubiquitin) cross-link involves residue Lys12. The residue at position 13 (Ser13) is a Phosphoserine. Position 19 is a phosphothreonine (Thr19). Residue Lys20 participates in ATP binding. The residue at position 20 (Lys20) is an N6-acetyllysine; alternate. Lys20 carries the post-translational modification N6-succinyllysine; alternate. A Glycyl lysine isopeptide (Lys-Gly) (interchain with G-Cter in ubiquitin); alternate cross-link involves residue Lys20. The next 2 membrane-spanning stretches (beta stranded) occupy residues 26-35 (LIKLDLKTKS) and 39-47 (LEFTSSGSA). Residues Lys53 and Lys61 each participate in a glycyl lysine isopeptide (Lys-Gly) (interchain with G-Cter in ubiquitin) cross-link. Residues 54–64 (VTGSLETKYRW) form a beta stranded membrane-spanning segment. Tyr67 is subject to Phosphotyrosine. 3 beta stranded membrane passes run 69 to 76 (LTFTEKWN), 80 to 89 (TLGTEITVED), and 95 to 104 (LKLTFDSSFS). Thr107 is modified (phosphothreonine). N6-acetyllysine; alternate is present on Lys109. Residue Lys109 forms a Glycyl lysine isopeptide (Lys-Gly) (interchain with G-Cter in ubiquitin); alternate linkage. Residue Lys110 forms a Glycyl lysine isopeptide (Lys-Gly) (interchain with G-Cter in ubiquitin) linkage. 4 consecutive transmembrane segments (beta stranded) span residues 111 to 120 (NAKIKTGYKR), 123 to 130 (VNLGCDVD), 137 to 145 (SIRGALVLG), and 150 to 158 (LAGYQMNFE). Lys161 participates in a covalent cross-link: Glycyl lysine isopeptide (Lys-Gly) (interchain with G-Cter in ubiquitin). 6 beta stranded membrane passes run 163–175 (RVTQSNFAVGYKT), 178–185 (FQLHTNVN), 189–198 (EFGGSIYQKV), 202–211 (LETAVNLAWT), 218–227 (RFGIAAKYQI), and 231–238 (ACFSAKVN). Ser193 carries the phosphoserine; by NEK1 modification. At Ser240 the chain carries Phosphoserine. 242–244 (LIG) contacts NAD(+). A beta stranded membrane pass occupies residues 242 to 251 (LIGLGYTQTL). Lys252 carries the post-translational modification N6-acetyllysine. Residues 254-263 (GIKLTLSALL) traverse the membrane as a beta stranded segment. 260–264 (SALLD) lines the NAD(+) pocket. Residue Lys266 is modified to N6-acetyllysine; alternate. Lys266 is covalently cross-linked (Glycyl lysine isopeptide (Lys-Gly) (interchain with G-Cter in ubiquitin); alternate). The beta stranded transmembrane segment at 273–282 (HKLGLGLEFQ) threads the bilayer. Residue Lys274 forms a Glycyl lysine isopeptide (Lys-Gly) (interchain with G-Cter in ubiquitin) linkage.

It belongs to the eukaryotic mitochondrial porin family. In terms of assembly, homodimer and homotrimer; in response to cyclic AMP or calcium; oligomerization is required for scramblase activity. Component of the mitochondrial permeability transition pore complex (mPTPC), at least composed of SPG7, VDAC1 and PPIF. Interacts with SPG7, NIPSNAP2 and SLC25A30. Interacts with hexokinases including HK1. The HK1-VDAC1 complex interacts with ATF2. Interacts with BCL2L1. Interacts with BAK1. Interacts with RTL10/BOP (via BH3 domain). Interacts with amyloid-beta and APP; induces VDAC1 dephosphorylation. Interacts with TMEM41B. Interacts with BCAP31. Interacts with HSPA9; this interaction couples ITPR1 to VDAC1. Post-translationally, phosphorylation at Ser-193 by NEK1 promotes the closed conformational state preventing excessive mitochondrial membrane permeability and subsequent apoptotic cell death after injury. Phosphorylation by the AKT-GSK3B axis stabilizes the protein probably by preventing ubiquitin-mediated proteasomal degradation. Ubiquitinated. Undergoes monoubiquitination and polyubiquitination by PRKN; monoubiquitination at Lys-274 inhibits apoptosis, whereas polyubiquitination leads to its degradation and promotes mitophagy. Deubiquitinated by USP30.

It is found in the mitochondrion outer membrane. The protein resides in the cell membrane. The protein localises to the membrane raft. It catalyses the reaction chloride(in) = chloride(out). The enzyme catalyses K(+)(in) = K(+)(out). It carries out the reaction ATP(in) = ATP(out). The catalysed reaction is Ca(2+)(in) = Ca(2+)(out). It catalyses the reaction Na(+)(in) = Na(+)(out). The enzyme catalyses Mg(2+)(in) = Mg(2+)(out). It carries out the reaction L-glutamate(out) = L-glutamate(in). The catalysed reaction is dopamine(out) = dopamine(in). It catalyses the reaction acetylcholine(in) = acetylcholine(out). The enzyme catalyses Fe(III)-[cytochrome c](out) = Fe(III)-[cytochrome c](in). It carries out the reaction a 1,2-diacyl-sn-glycero-3-phosphocholine(in) = a 1,2-diacyl-sn-glycero-3-phosphocholine(out). The catalysed reaction is a 1,2-diacyl-sn-glycero-3-phospho-L-serine(in) = a 1,2-diacyl-sn-glycero-3-phospho-L-serine(out). With respect to regulation, inhibited by nitric oxide. Non-selective voltage-gated ion channel that mediates the transport of anions and cations through the mitochondrion outer membrane and plasma membrane. The channel at the outer mitochondrial membrane allows diffusion of small hydrophilic molecules; in the plasma membrane it is involved in cell volume regulation and apoptosis. It adopts an open conformation at low or zero membrane potential and a closed conformation at potentials above 30-40 mV. The open state has a weak anion selectivity whereas the closed state is cation-selective. Binds various signaling molecules, including the sphingolipid ceramide, the phospholipid phosphatidylcholine, and the sterols cholesterol and oxysterol. In depolarized mitochondria, acts downstream of PRKN and PINK1 to promote mitophagy or prevent apoptosis; polyubiquitination by PRKN promotes mitophagy, while monoubiquitination by PRKN decreases mitochondrial calcium influx which ultimately inhibits apoptosis. May participate in the formation of the permeability transition pore complex (PTPC) responsible for the release of mitochondrial products that triggers apoptosis. May mediate ATP export from cells. Part of a complex composed of HSPA9, ITPR1 and VDAC1 that regulates mitochondrial calcium-dependent apoptosis by facilitating calcium transport from the ER lumen to the mitochondria intermembrane space thus providing calcium for the downstream calcium channel MCU that directly releases it into mitochondria matrix. Mediates cytochrome c efflux. In terms of biological role, catalyzes the scrambling of phospholipids across the outer mitochondrial membrane; the mechanism is unrelated to channel activity and is capable of translocating both anionic and zwitterionic phospholipids. The protein is Non-selective voltage-gated ion channel VDAC1 of Sus scrofa (Pig).